A 176-amino-acid polypeptide reads, in one-letter code: Nuclear ribonuclease Z (176 aa).

Belongs to the RNase Z family. As to quaternary structure, homodimer. It depends on Zn(2+) as a cofactor.

Its subcellular location is the nucleus. It carries out the reaction Endonucleolytic cleavage of RNA, removing extra 3' nucleotides from tRNA precursor, generating 3' termini of tRNAs. A 3'-hydroxy group is left at the tRNA terminus and a 5'-phosphoryl group is left at the trailer molecule.. Zinc phosphodiesterase, which displays some tRNA 3'-processing endonuclease activity. Probably involved in tRNA maturation, by removing a 3'-trailer from precursor tRNA. The sequence is that of Nuclear ribonuclease Z (ELAC) from Triticum aestivum (Wheat).